Consider the following 492-residue polypeptide: 2-succinylbenzoate--CoA ligase (492 aa).

The protein belongs to the ATP-dependent AMP-binding enzyme family. MenE subfamily.

The enzyme catalyses 2-succinylbenzoate + ATP + CoA = 2-succinylbenzoyl-CoA + AMP + diphosphate. It participates in quinol/quinone metabolism; 1,4-dihydroxy-2-naphthoate biosynthesis; 1,4-dihydroxy-2-naphthoate from chorismate: step 5/7. The protein operates within quinol/quinone metabolism; menaquinone biosynthesis. Functionally, converts 2-succinylbenzoate (OSB) to 2-succinylbenzoyl-CoA (OSB-CoA). In Staphylococcus aureus (strain bovine RF122 / ET3-1), this protein is 2-succinylbenzoate--CoA ligase.